The chain runs to 204 residues: ATP phosphoribosyltransferase (204 aa).

Belongs to the ATP phosphoribosyltransferase family. Short subfamily. In terms of assembly, heteromultimer composed of HisG and HisZ subunits.

It is found in the cytoplasm. The catalysed reaction is 1-(5-phospho-beta-D-ribosyl)-ATP + diphosphate = 5-phospho-alpha-D-ribose 1-diphosphate + ATP. Its pathway is amino-acid biosynthesis; L-histidine biosynthesis; L-histidine from 5-phospho-alpha-D-ribose 1-diphosphate: step 1/9. Its function is as follows. Catalyzes the condensation of ATP and 5-phosphoribose 1-diphosphate to form N'-(5'-phosphoribosyl)-ATP (PR-ATP). Has a crucial role in the pathway because the rate of histidine biosynthesis seems to be controlled primarily by regulation of HisG enzymatic activity. This chain is ATP phosphoribosyltransferase, found in Staphylococcus epidermidis (strain ATCC 35984 / DSM 28319 / BCRC 17069 / CCUG 31568 / BM 3577 / RP62A).